We begin with the raw amino-acid sequence, 442 residues long: MANIDERLFVTLAKQLGEYKKILVGFSGGLDSSVLLHLLVNWRNQHNQKIQLRAIHIHHGLNLKADQWIEHCQLICDDWQVEFHSARVTIDARQKGIEAAARDARYQVFKSELQKDEVLVTAQHLDDQAETFLLALKRGSGPAGLASMPSIAVFADTLLLRPLLDYSRNELEKYASKHRLNWIEDDSNQDDRYDRNFLRLHIMPLLNQRWSHFPKAAARSASLCGEQEQLLDELLNESLKELITQDGALGIVSLAVCSEAKRNALLRRWFGYHGMKMPSREQLNRLWYEVALARTDAEPRLQFGKYDVRRYKQKLWLVPQWQSLRETILEWDICNTLVLPDRLGELNIADRGIQVRVPADNERVTIRFGVQGMISIVGRQHSRHSKKLWQELGVAPWLRERIPLLYYNEQLIAALGVFVTKESEAAEGRKMLTMNWHKTLLK.

Position 27–32 (27–32) interacts with ATP; it reads SGGLDS.

The protein belongs to the tRNA(Ile)-lysidine synthase family.

The protein resides in the cytoplasm. The enzyme catalyses cytidine(34) in tRNA(Ile2) + L-lysine + ATP = lysidine(34) in tRNA(Ile2) + AMP + diphosphate + H(+). Its function is as follows. Ligates lysine onto the cytidine present at position 34 of the AUA codon-specific tRNA(Ile) that contains the anticodon CAU, in an ATP-dependent manner. Cytidine is converted to lysidine, thus changing the amino acid specificity of the tRNA from methionine to isoleucine. This Photorhabdus laumondii subsp. laumondii (strain DSM 15139 / CIP 105565 / TT01) (Photorhabdus luminescens subsp. laumondii) protein is tRNA(Ile)-lysidine synthase.